The sequence spans 332 residues: MPNKVYDVTIIGGGPIGLFSAFYSGLRSMKTKIIDAEPAVGGKVRYFFPEKIIRDIGGIPAITGENLVANLKQQAETFHPTIVCSERVVDVTKLSDGTFQLTSHNGSIHFSKTIVIATGSGTFEVNKLEALHAEDFPFAIHYDVKNIEQFRDKVVVVSGGGNSAIDWAQTLEPIAKQVHLIYRGEDFKAHEESVRELQNSRVEIHIHHEINELIGTNNQLTKINVCCNKTQATKTIQTDALFINHGVKVDLGTMAEWGFEQADFGIVVDDEMKTTVPGIFACGDSATYPRKIRIIAAGLHEGPIAINSAKKYLEPTAADEAMISTHHESFIG.

FAD-binding residues include Asp35, Lys43, Phe48, Val88, Phe123, Asp284, and Thr325.

This sequence belongs to the ferredoxin--NADP reductase type 2 family. In terms of assembly, homodimer. Requires FAD as cofactor.

It catalyses the reaction 2 reduced [2Fe-2S]-[ferredoxin] + NADP(+) + H(+) = 2 oxidized [2Fe-2S]-[ferredoxin] + NADPH. The protein is Ferredoxin--NADP reductase 1 of Listeria monocytogenes serotype 4b (strain F2365).